A 173-amino-acid chain; its full sequence is dCTP deaminase, dUMP-forming (173 aa).

Residues 93–98 (RSSIGR), D111, 119–121 (TLE), and Q138 contribute to the dCTP site. Catalysis depends on E121, which acts as the Proton donor/acceptor.

Belongs to the dCTP deaminase family. Homotrimer.

The catalysed reaction is dCTP + 2 H2O = dUMP + NH4(+) + diphosphate. It participates in pyrimidine metabolism; dUMP biosynthesis; dUMP from dCTP: step 1/1. Functionally, bifunctional enzyme that catalyzes both the deamination of dCTP to dUTP and the hydrolysis of dUTP to dUMP without releasing the toxic dUTP intermediate. The sequence is that of dCTP deaminase, dUMP-forming from Leptospira borgpetersenii serovar Hardjo-bovis (strain JB197).